The chain runs to 283 residues: Arsenite methyltransferase (283 aa).

Belongs to the methyltransferase superfamily. Arsenite methyltransferase family.

It catalyses the reaction arsenic triglutathione + [thioredoxin]-dithiol + S-adenosyl-L-methionine + 2 H2O = methylarsonous acid + [thioredoxin]-disulfide + 3 glutathione + S-adenosyl-L-homocysteine + H(+). The enzyme catalyses arsenic triglutathione + 2 [thioredoxin]-dithiol + 2 S-adenosyl-L-methionine + H2O = dimethylarsinous acid + 2 [thioredoxin]-disulfide + 3 glutathione + 2 S-adenosyl-L-homocysteine + 2 H(+). It carries out the reaction arsenic triglutathione + 3 [thioredoxin]-dithiol + 3 S-adenosyl-L-methionine = trimethylarsine + 3 [thioredoxin]-disulfide + 3 glutathione + 3 S-adenosyl-L-homocysteine + 3 H(+). Catalyzes the transfer of a methyl group from AdoMet to arsenite, producing methylated arsenicals. Involved in the conversion of As(III) to a number of di- and trimethylated species, with trimethylarsine as the end product. Reduces the arsenic toxicity in the cell and may contribute to the global arsenic cycling. The polypeptide is Arsenite methyltransferase (Rhodopseudomonas palustris (strain ATCC BAA-98 / CGA009)).